The sequence spans 190 residues: Adenine phosphoribosyltransferase (190 aa).

This sequence belongs to the purine/pyrimidine phosphoribosyltransferase family. As to quaternary structure, homodimer.

The protein resides in the cytoplasm. It carries out the reaction AMP + diphosphate = 5-phospho-alpha-D-ribose 1-diphosphate + adenine. The protein operates within purine metabolism; AMP biosynthesis via salvage pathway; AMP from adenine: step 1/1. Its function is as follows. Catalyzes a salvage reaction resulting in the formation of AMP, that is energically less costly than de novo synthesis. This Cupriavidus taiwanensis (strain DSM 17343 / BCRC 17206 / CCUG 44338 / CIP 107171 / LMG 19424 / R1) (Ralstonia taiwanensis (strain LMG 19424)) protein is Adenine phosphoribosyltransferase.